The primary structure comprises 113 residues: MADIAVPLTFTDAAANKVKTLISEEENTELKLRVYITGGGCSGFQYGFTFDEKTNDGDLIVENSGVKLVVDPMSLQYLVGGTVDYTEGLEGSRFIVNNPNASTTCGCGSSFSI.

The iron-sulfur cluster site is built by cysteine 41, cysteine 105, and cysteine 107.

This sequence belongs to the HesB/IscA family. Homodimer. Iron-sulfur cluster serves as cofactor.

Functionally, required for insertion of 4Fe-4S clusters for at least IspG. The sequence is that of Iron-sulfur cluster insertion protein ErpA from Histophilus somni (strain 2336) (Haemophilus somnus).